An 86-amino-acid polypeptide reads, in one-letter code: RNA-binding protein Hfq (86 aa).

The Sm domain occupies D9–V69.

Belongs to the Hfq family. In terms of assembly, homohexamer.

RNA chaperone that binds small regulatory RNA (sRNAs) and mRNAs to facilitate mRNA translational regulation in response to envelope stress, environmental stress and changes in metabolite concentrations. Also binds with high specificity to tRNAs. The chain is RNA-binding protein Hfq from Thermosipho melanesiensis (strain DSM 12029 / CIP 104789 / BI429).